The chain runs to 252 residues: Carbonic anhydrase (252 aa).

A signal peptide spans 1–26 (MPRFPRTLPRLTAVLLLACTAFSAAA). Positions 31–252 (THWGYTGHDS…QPLNARVVIE (222 aa)) constitute an Alpha-carbonic anhydrase domain. Residues cysteine 54 and cysteine 207 are joined by a disulfide bond. The Proton acceptor role is filled by histidine 92. 3 residues coordinate Zn(2+): histidine 118, histidine 120, and histidine 137. 203–204 (TT) contributes to the substrate binding site.

The protein belongs to the alpha-carbonic anhydrase family. As to quaternary structure, homodimer. Zn(2+) serves as cofactor.

It localises to the periplasm. The enzyme catalyses hydrogencarbonate + H(+) = CO2 + H2O. Its function is as follows. Reversible hydration of carbon dioxide. This chain is Carbonic anhydrase (cah), found in Neisseria gonorrhoeae.